The following is a 656-amino-acid chain: MFFHAILVLIQVALALGASPRAGSSERSKYFVTSLPGMYSNLPKEEIPIMFSGQLELFPENNTHYYFWKFVNPNPIAEAERRTIFWLNGGPGCSSMDGALMEAGPFRVNDDKEIVYNNGSWHKAGDIVFVDQPAGTGFSYSDEYEHELPDVSVHFLKFLEKYFEVFPEDRQNQIFFAGESYAGQYIPYIADGILKRNKNLKAGESPYDLRGLLIGNGWIAPNEQSLSYVQYALQAGFVSPSMPGWSRLLASQERCQNVVNSVNTQDDSVSDYKVVSDVCDQVLNTLLEVARDRDAPADQQCVNMYDYTLRDEFPSCGMNWPPDLVNVKPFLNIPGVQSQLNLVHKKPWLECSGRVGRNFVAQRSKPAVHLLPSLLEDVPILLFNGNRDIICNYIGTEAFIKELEWNGQKGWDDDNVFDWNFDGNLAGYVRNSRNLTFVNVFNSSHMVPFDLPDTSRSLMDLVTGNFDIKDDKILTYKLGTRGQAKQSDKKPASTSSIPSEISATALASGSSSASAQASATANEADGDNNTSHKIERAIQLLVIIVLLWGIYALYSSYKSRPSSIIKSGPTGKKKNVQWADQLRRFQEDDQVRVQPHGIFAKALNKFKGNSDGAYAPVQGRYEDIEMSSASPIDDFVVVSDDEEEEPSRNEPSSNQK.

Positions Met-1 to Gly-17 are cleaved as a signal peptide. At Ala-18–Arg-536 the chain is on the lumenal side. 2 N-linked (GlcNAc...) asparagine glycosylation sites follow: Asn-61 and Asn-118. Active-site residues include Ser-180 and Asp-388. N-linked (GlcNAc...) asparagine glycosylation is found at Asn-434 and Asn-442. His-445 is an active-site residue. The chain crosses the membrane as a helical span at residues Ala-537–Tyr-557. Residues Lys-558–Lys-656 are Cytoplasmic-facing. A disordered region spans residues Met-626–Lys-656.

It belongs to the peptidase S10 family.

It localises to the golgi apparatus. The protein localises to the trans-Golgi network membrane. It catalyses the reaction Preferential release of a C-terminal arginine or lysine residue.. Its function is as follows. Protease with a carboxypeptidase B-like function involved in the C-terminal processing of the lysine and arginine residues from protein precursors. Promotes cell fusion and is involved in the programmed cell death. This is Pheromone-processing carboxypeptidase KEX1 (KEX1) from Meyerozyma guilliermondii (strain ATCC 6260 / CBS 566 / DSM 6381 / JCM 1539 / NBRC 10279 / NRRL Y-324) (Yeast).